Here is a 198-residue protein sequence, read N- to C-terminus: dITP/XTP pyrophosphatase (198 aa).

7-12 (THNPHK) serves as a coordination point for substrate. Residues glutamate 40 and aspartate 69 each contribute to the Mg(2+) site. The active-site Proton acceptor is aspartate 69. Substrate contacts are provided by residues threonine 70, 151 to 154 (FGYD), lysine 174, and 179 to 180 (HR).

It belongs to the HAM1 NTPase family. Homodimer. It depends on Mg(2+) as a cofactor.

The catalysed reaction is XTP + H2O = XMP + diphosphate + H(+). It catalyses the reaction dITP + H2O = dIMP + diphosphate + H(+). It carries out the reaction ITP + H2O = IMP + diphosphate + H(+). Pyrophosphatase that catalyzes the hydrolysis of nucleoside triphosphates to their monophosphate derivatives, with a high preference for the non-canonical purine nucleotides XTP (xanthosine triphosphate), dITP (deoxyinosine triphosphate) and ITP. Seems to function as a house-cleaning enzyme that removes non-canonical purine nucleotides from the nucleotide pool, thus preventing their incorporation into DNA/RNA and avoiding chromosomal lesions. This chain is dITP/XTP pyrophosphatase, found in Thermoanaerobacter sp. (strain X514).